The primary structure comprises 436 residues: Type II methyltransferase M.BsuRI (436 aa).

Residues 59–409 (INVLSLFSGC…SPIANWAINY (351 aa)) enclose the SAM-dependent MTase C5-type domain. C157 is an active-site residue.

Belongs to the class I-like SAM-binding methyltransferase superfamily. C5-methyltransferase family. In terms of assembly, monomer.

It carries out the reaction a 2'-deoxycytidine in DNA + S-adenosyl-L-methionine = a 5-methyl-2'-deoxycytidine in DNA + S-adenosyl-L-homocysteine + H(+). Functionally, a methylase, recognizes the double-stranded sequence 5'-GGCC-3', methylates C-3 on both strands, and protects the DNA from cleavage by the BsuRI endonuclease. The chain is Type II methyltransferase M.BsuRI (hsdRM) from Bacillus subtilis.